The sequence spans 384 residues: BarH-like 2 homeobox protein (384 aa).

Disordered stretches follow at residues 1–134 (MTAM…APRT), 154–237 (CAPY…TAFS), and 364–384 (PGGQPALNPLSNPIPGTPHPR). Residues 119–134 (QSAAQQLGSAAAAPRT) are compositionally biased toward low complexity. A compositionally biased stretch (basic and acidic residues) spans 177 to 217 (ESFRPKLEQEDSKTKLDKREDSQSDIKCHGTKEEGDREITS). Residues 229 to 288 (PRKARTAFSDHQLNQLERSFERQKYLSVQDRMDLAAALNLTDTQVKTWYQNRRTKWKRQT) constitute a DNA-binding region (homeobox).

The protein belongs to the BAR homeobox family. As to expression, expressed in the ganglion cell layer of the retina in the eye and in the ventral zone of the dorsal thalamus of the CNS.

It localises to the nucleus. Potential regulator of neural basic helix-loop-helix genes. It may down-regulate expression of ASCL1 and, within the thalamus, up-regulate NGN2, thereby regulating distinct patterns of neuronal differentiation. The polypeptide is BarH-like 2 homeobox protein (Barhl2) (Rattus norvegicus (Rat)).